Reading from the N-terminus, the 498-residue chain is Probable malate:quinone oxidoreductase (498 aa).

The protein belongs to the MQO family. FAD serves as cofactor.

The enzyme catalyses (S)-malate + a quinone = a quinol + oxaloacetate. It functions in the pathway carbohydrate metabolism; tricarboxylic acid cycle; oxaloacetate from (S)-malate (quinone route): step 1/1. The protein is Probable malate:quinone oxidoreductase of Prochlorococcus marinus (strain MIT 9312).